We begin with the raw amino-acid sequence, 528 residues long: Putative galacturonosyltransferase 2 (528 aa).

This sequence belongs to the glycosyltransferase 8 family.

Its pathway is glycan metabolism; pectin biosynthesis. May be involved in pectin and/or xylans biosynthesis in cell walls. The sequence is that of Putative galacturonosyltransferase 2 (GAUT2) from Arabidopsis thaliana (Mouse-ear cress).